The following is a 546-amino-acid chain: CTP synthase (546 aa).

Residues 1-265 form an amidoligase domain region; that stretch reads MTKYIFVTGG…DDIIAEQLQL (265 aa). CTP is bound at residue Ser13. Ser13 is a binding site for UTP. ATP contacts are provided by residues 14–19 and Asp71; that span reads SLGKGI. Mg(2+)-binding residues include Asp71 and Glu139. CTP contacts are provided by residues 146–148, 186–191, and Lys222; these read DIE and KTKPTQ. UTP contacts are provided by residues 186–191 and Lys222; that span reads KTKPTQ. Positions 290-542 constitute a Glutamine amidotransferase type-1 domain; the sequence is KIAMVGKYVD…VKAALAHQAD (253 aa). Gly351 contacts L-glutamine. The active-site Nucleophile; for glutamine hydrolysis is Cys378. L-glutamine is bound by residues 379-382, Glu402, and Arg469; that span reads LGMQ. Residues His515 and Glu517 contribute to the active site.

Belongs to the CTP synthase family. In terms of assembly, homotetramer.

It catalyses the reaction UTP + L-glutamine + ATP + H2O = CTP + L-glutamate + ADP + phosphate + 2 H(+). The catalysed reaction is L-glutamine + H2O = L-glutamate + NH4(+). It carries out the reaction UTP + NH4(+) + ATP = CTP + ADP + phosphate + 2 H(+). The protein operates within pyrimidine metabolism; CTP biosynthesis via de novo pathway; CTP from UDP: step 2/2. Allosterically activated by GTP, when glutamine is the substrate; GTP has no effect on the reaction when ammonia is the substrate. The allosteric effector GTP functions by stabilizing the protein conformation that binds the tetrahedral intermediate(s) formed during glutamine hydrolysis. Inhibited by the product CTP, via allosteric rather than competitive inhibition. Catalyzes the ATP-dependent amination of UTP to CTP with either L-glutamine or ammonia as the source of nitrogen. Regulates intracellular CTP levels through interactions with the four ribonucleotide triphosphates. The chain is CTP synthase from Chromobacterium violaceum (strain ATCC 12472 / DSM 30191 / JCM 1249 / CCUG 213 / NBRC 12614 / NCIMB 9131 / NCTC 9757 / MK).